A 100-amino-acid polypeptide reads, in one-letter code: Urease subunit gamma (100 aa).

It belongs to the urease gamma subunit family. Heterotrimer of UreA (gamma), UreB (beta) and UreC (alpha) subunits. Three heterotrimers associate to form the active enzyme.

The protein resides in the cytoplasm. It catalyses the reaction urea + 2 H2O + H(+) = hydrogencarbonate + 2 NH4(+). It participates in nitrogen metabolism; urea degradation; CO(2) and NH(3) from urea (urease route): step 1/1. In Burkholderia orbicola (strain MC0-3), this protein is Urease subunit gamma.